Here is a 387-residue protein sequence, read N- to C-terminus: Mannitol-1-phosphate 5-dehydrogenase (387 aa).

3 to 14 is a binding site for NAD(+); that stretch reads ALHFGAGNIGRG.

It belongs to the mannitol dehydrogenase family.

The catalysed reaction is D-mannitol 1-phosphate + NAD(+) = beta-D-fructose 6-phosphate + NADH + H(+). The protein is Mannitol-1-phosphate 5-dehydrogenase of Yersinia pestis bv. Antiqua (strain Antiqua).